The chain runs to 300 residues: Bifunctional protein FolD 2 (300 aa).

NADP(+) contacts are provided by residues 166-168 (GRS), serine 191, and isoleucine 232.

Belongs to the tetrahydrofolate dehydrogenase/cyclohydrolase family. As to quaternary structure, homodimer.

It carries out the reaction (6R)-5,10-methylene-5,6,7,8-tetrahydrofolate + NADP(+) = (6R)-5,10-methenyltetrahydrofolate + NADPH. It catalyses the reaction (6R)-5,10-methenyltetrahydrofolate + H2O = (6R)-10-formyltetrahydrofolate + H(+). Its pathway is one-carbon metabolism; tetrahydrofolate interconversion. Catalyzes the oxidation of 5,10-methylenetetrahydrofolate to 5,10-methenyltetrahydrofolate and then the hydrolysis of 5,10-methenyltetrahydrofolate to 10-formyltetrahydrofolate. The protein is Bifunctional protein FolD 2 of Roseobacter denitrificans (strain ATCC 33942 / OCh 114) (Erythrobacter sp. (strain OCh 114)).